Here is a 120-residue protein sequence, read N- to C-terminus: Flagellar protein FliT (120 aa).

Positions 1–50 (MENLSPLLIEYQGLLKLIRNIKAMALNGLWDDVVEQEIVYIQSIERISQI) are required for homodimerization. A fliD binding region spans residues 60-98 (VQLQFRQLLQDILDTESQVKELLQNRMQELAVLIQQSQN).

This sequence belongs to the FliT family. In terms of assembly, homodimer. Interacts with FliD and FlhC.

The protein localises to the cytoplasm. The protein resides in the cytosol. Its function is as follows. Dual-function protein that regulates the transcription of class 2 flagellar operons and that also acts as an export chaperone for the filament-capping protein FliD. As a transcriptional regulator, acts as an anti-FlhDC factor; it directly binds FlhC, thus inhibiting the binding of the FlhC/FlhD complex to class 2 promoters, resulting in decreased expression of class 2 flagellar operons. As a chaperone, effects FliD transition to the membrane by preventing its premature polymerization, and by directing it to the export apparatus. The chain is Flagellar protein FliT from Dickeya chrysanthemi (Pectobacterium chrysanthemi).